A 200-amino-acid chain; its full sequence is Recombination protein RecR (200 aa).

Residues 59–74 form a C4-type zinc finger; sequence CEVCGNVCESSPCTIC. In terms of domain architecture, Toprim spans 82–177; sequence GTICVVEEPK…KVTRLASGLP (96 aa).

This sequence belongs to the RecR family.

Its function is as follows. May play a role in DNA repair. It seems to be involved in an RecBC-independent recombinational process of DNA repair. It may act with RecF and RecO. In Bifidobacterium animalis subsp. lactis (strain AD011), this protein is Recombination protein RecR.